We begin with the raw amino-acid sequence, 406 residues long: DNA primase DnaG (406 aa).

One can recognise a Toprim domain in the interval 169-247 (PNLIIVEGRA…KIDFVARAPI (79 aa)). Residues Glu-175, Asp-220, and Asp-222 each coordinate Mg(2+).

The protein belongs to the archaeal DnaG primase family. In terms of assembly, forms a ternary complex with MCM helicase and DNA. Component of the archaeal exosome complex. Interacts with Csl4 but not with Rrp4. Mg(2+) serves as cofactor.

It carries out the reaction ssDNA + n NTP = ssDNA/pppN(pN)n-1 hybrid + (n-1) diphosphate.. RNA polymerase that catalyzes the synthesis of short RNA molecules used as primers for DNA polymerase during DNA replication. Can use NTPs but not dNTPs. Binds DNA. Also part of the exosome, which is a complex involved in RNA degradation. Acts as a poly(A)-binding protein that enhances the interaction between heteromeric, adenine-rich transcripts and the exosome. The polypeptide is DNA primase DnaG (Saccharolobus solfataricus (strain ATCC 35092 / DSM 1617 / JCM 11322 / P2) (Sulfolobus solfataricus)).